The primary structure comprises 123 residues: Loki profilin-3 (123 aa).

It belongs to the Asgard profilin family.

The protein localises to the cytoplasm. The protein resides in the cytoskeleton. Its function is as follows. Binds to actin and affects the structure of the cytoskeleton. At high concentrations inhibits spontaneous rabbit actin nucleation. This strongly suggests this archaea has a profilin-regulated actin system, and actin-type genes can be identified in this organism. This Lokiarchaeum sp. (strain GC14_75) protein is Loki profilin-3.